The primary structure comprises 257 residues: Phycoerythrobilin:ferredoxin oxidoreductase (257 aa).

This sequence belongs to the HY2 family.

The enzyme catalyses (3Z)-phycoerythrobilin + oxidized 2[4Fe-4S]-[ferredoxin] = 15,16-dihydrobiliverdin + reduced 2[4Fe-4S]-[ferredoxin] + 2 H(+). In terms of biological role, catalyzes the two-electron reduction of the C2 and C3(1) diene system of 15,16-dihydrobiliverdin. In Prochlorococcus marinus subsp. pastoris (strain CCMP1986 / NIES-2087 / MED4), this protein is Phycoerythrobilin:ferredoxin oxidoreductase (pebB).